The following is a 705-amino-acid chain: Polyribonucleotide nucleotidyltransferase (705 aa).

Mg(2+) contacts are provided by aspartate 486 and aspartate 492. Residues 553–612 form the KH domain; sequence PQFHTMKVDPEKIRDIIGKGGATIRSITEETGASIDIDDDGTVKIYGDDGDSLQGAINRI. One can recognise an S1 motif domain in the interval 622-690; that stretch reads GEVYKGKVVR…QRGRIKLSIK (69 aa).

This sequence belongs to the polyribonucleotide nucleotidyltransferase family. In terms of assembly, component of the RNA degradosome, which is a multiprotein complex involved in RNA processing and mRNA degradation. Requires Mg(2+) as cofactor.

Its subcellular location is the cytoplasm. It catalyses the reaction RNA(n+1) + phosphate = RNA(n) + a ribonucleoside 5'-diphosphate. Involved in mRNA degradation. Catalyzes the phosphorolysis of single-stranded polyribonucleotides processively in the 3'- to 5'-direction. This is Polyribonucleotide nucleotidyltransferase from Teredinibacter turnerae (strain ATCC 39867 / T7901).